The following is a 156-amino-acid chain: MEAYLFLIGLVLIGVIAQNKSLIIAAAFLLIIKAIGLDGRLFPSLQAKGITWGVTLITAAILVPIATGDIGFRELLNSVRGHIGIISFLAGIFVAIIAAHGVGLMKEDPLVTTALLAGTILAVGLFRGVPVGPLIGAGIAALVIGMWDIIVKAISG.

5 consecutive transmembrane segments (helical) span residues 5–25 (LFLI…LIIA), 52–72 (WGVT…DIGF), 83–103 (IGII…HGVG), 109–129 (PLVT…FRGV), and 131–151 (VGPL…DIIV).

It belongs to the UPF0756 family.

It localises to the cell membrane. This Exiguobacterium sibiricum (strain DSM 17290 / CCUG 55495 / CIP 109462 / JCM 13490 / 255-15) protein is UPF0756 membrane protein Exig_2210.